The sequence spans 376 residues: Histidinol dehydrogenase (376 aa).

NAD(+)-binding residues include Y100 and N182. Substrate-binding residues include S205, Q227, and H230. Residues Q227 and H230 each coordinate Zn(2+). Residues E275 and H276 each act as proton acceptor in the active site. Residues H276, D309, E363, and H368 each contribute to the substrate site. Zn(2+) is bound at residue D309. Residue H368 coordinates Zn(2+).

The protein belongs to the histidinol dehydrogenase family. The cofactor is Zn(2+).

It carries out the reaction L-histidinol + 2 NAD(+) + H2O = L-histidine + 2 NADH + 3 H(+). It participates in amino-acid biosynthesis; L-histidine biosynthesis; L-histidine from 5-phospho-alpha-D-ribose 1-diphosphate: step 9/9. Catalyzes the sequential NAD-dependent oxidations of L-histidinol to L-histidinaldehyde and then to L-histidine. The protein is Histidinol dehydrogenase of Thermococcus kodakarensis (strain ATCC BAA-918 / JCM 12380 / KOD1) (Pyrococcus kodakaraensis (strain KOD1)).